A 108-amino-acid chain; its full sequence is Parvalbumin beta (108 aa).

Alanine 1 is subject to N-acetylalanine. A disulfide bridge links cysteine 11 with cysteine 33. 2 consecutive EF-hand domains span residues 38 to 73 (KSAD…FKAG) and 77 to 108 (LTDA…LVKA). Ca(2+) is bound by residues aspartate 51, aspartate 53, serine 55, phenylalanine 57, glutamate 59, glutamate 62, aspartate 90, aspartate 92, aspartate 94, alanine 96, and glutamate 101.

It belongs to the parvalbumin family.

In terms of biological role, in muscle, parvalbumin is thought to be involved in relaxation after contraction. It binds two calcium ions. In Merlangius merlangus (Whiting), this protein is Parvalbumin beta.